The primary structure comprises 235 residues: Small ribosomal subunit protein eS6 (235 aa).

Residues 190–212 (GFHPRERGERRRKSVRGRMIPDP) are disordered.

This sequence belongs to the eukaryotic ribosomal protein eS6 family.

The sequence is that of Small ribosomal subunit protein eS6 from Aeropyrum pernix (strain ATCC 700893 / DSM 11879 / JCM 9820 / NBRC 100138 / K1).